The following is a 571-amino-acid chain: Alpha-1D adrenergic receptor (571 aa).

Residues 1 to 94 (MTFRDLLSVN…AVGGLVVSAQ (94 aa)) are Extracellular-facing. Positions 13–75 (GSRSDGSAGG…SSAGEPGAAG (63 aa)) are disordered. Residues 19–34 (SAGGASAGGSGGGSGG) show a composition bias toward gly residues. A compositionally biased stretch (low complexity) spans 35–47 (AAASEGRAVDGVP). The span at 48–57 (GTAGSGGVVG) shows a compositional bias: gly residues. Residues asparagine 64 and asparagine 81 are each glycosylated (N-linked (GlcNAc...) asparagine). Residues 95-120 (GVGVGVFLAAFILMAVAGNLLVILSV) traverse the membrane as a helical segment. Over 121–132 (ACNRHLQTVTNY) the chain is Cytoplasmic. Residues 133 to 158 (FIVNLAVADLLLSATVLPFSATMEVL) traverse the membrane as a helical segment. At 159-168 (GFWAFGRAFC) the chain is on the extracellular side. A helical membrane pass occupies residues 169 to 191 (DVWAAVDVLCCTASILSLCTISV). The Cytoplasmic segment spans residues 192 to 212 (DRYVGVRHSLKYPSIMTERKA). Residues 213–237 (AAILALLWAVAIVVSVGPLLGWKEP) traverse the membrane as a helical segment. Topologically, residues 238 to 250 (VPPDERFCGITEE) are extracellular. A helical transmembrane segment spans residues 251–274 (AGYAVFSSLCSFYLPMAVIVVMYC). Topologically, residues 275 to 348 (RVYVVARSTT…KFSREKKAAK (74 aa)) are cytoplasmic. The helical transmembrane segment at 349–373 (TLAIVVGVFVLCWFPFFFVLPLGSL) threads the bilayer. The Extracellular portion of the chain corresponds to 374-380 (FPQLKPS). Residues 381 to 405 (EGVFKVIFWLGYFNSCVNPLIYPCS) form a helical membrane-spanning segment. At 406-571 (SREFKRAFLR…DYSHLRETDI (166 aa)) the chain is on the cytoplasmic side. Cysteine 419 carries the S-palmitoyl cysteine lipid modification. The disordered stretch occupies residues 465-487 (LPAPEATDTPSAPEAQAPVVGRR).

It belongs to the G-protein coupled receptor 1 family. Adrenergic receptor subfamily. ADRA1D sub-subfamily. In terms of assembly, interacts with FLNA (via filamin repeat 21); increases PKA-mediated phosphorylation of FLNA. In terms of processing, palmitoylated. Palmitoylation by ZDHHC21 may increase the expression of the receptor and regulate downstream signaling.

Its subcellular location is the cell membrane. Its function is as follows. This alpha-adrenergic receptor mediates its effect through the influx of extracellular calcium. This is Alpha-1D adrenergic receptor (ADRA1D) from Sus scrofa (Pig).